Reading from the N-terminus, the 273-residue chain is Formamidopyrimidine-DNA glycosylase (273 aa).

P2 (schiff-base intermediate with DNA) is an active-site residue. Residue E3 is the Proton donor of the active site. K59 serves as the catalytic Proton donor; for beta-elimination activity. Residues H92 and R111 each contribute to the DNA site. The FPG-type zinc-finger motif lies at 239-273; sequence KVYGKTDEPCVVCGTPIEKIKLNGRGTHFCPNCQK. R263 acts as the Proton donor; for delta-elimination activity in catalysis.

This sequence belongs to the FPG family. In terms of assembly, monomer. Requires Zn(2+) as cofactor.

The catalysed reaction is Hydrolysis of DNA containing ring-opened 7-methylguanine residues, releasing 2,6-diamino-4-hydroxy-5-(N-methyl)formamidopyrimidine.. The enzyme catalyses 2'-deoxyribonucleotide-(2'-deoxyribose 5'-phosphate)-2'-deoxyribonucleotide-DNA = a 3'-end 2'-deoxyribonucleotide-(2,3-dehydro-2,3-deoxyribose 5'-phosphate)-DNA + a 5'-end 5'-phospho-2'-deoxyribonucleoside-DNA + H(+). Its function is as follows. Involved in base excision repair of DNA damaged by oxidation or by mutagenic agents. Acts as a DNA glycosylase that recognizes and removes damaged bases. Has a preference for oxidized purines, such as 7,8-dihydro-8-oxoguanine (8-oxoG). Has AP (apurinic/apyrimidinic) lyase activity and introduces nicks in the DNA strand. Cleaves the DNA backbone by beta-delta elimination to generate a single-strand break at the site of the removed base with both 3'- and 5'-phosphates. The protein is Formamidopyrimidine-DNA glycosylase of Listeria monocytogenes serovar 1/2a (strain ATCC BAA-679 / EGD-e).